The following is a 283-amino-acid chain: Probable endonuclease 4 (283 aa).

Zn(2+) is bound by residues His69, His109, Glu145, Asp179, His182, His216, Asp229, His231, and Glu261.

The protein belongs to the AP endonuclease 2 family. Zn(2+) is required as a cofactor.

The catalysed reaction is Endonucleolytic cleavage to 5'-phosphooligonucleotide end-products.. Endonuclease IV plays a role in DNA repair. It cleaves phosphodiester bonds at apurinic or apyrimidinic (AP) sites, generating a 3'-hydroxyl group and a 5'-terminal sugar phosphate. The chain is Probable endonuclease 4 from Campylobacter curvus (strain 525.92).